The sequence spans 72 residues: Translation initiation factor IF-1 2 (72 aa).

The S1-like domain occupies 1 to 72 (MAKEDTIQMQ…SRARIVFRAK (72 aa)).

The protein belongs to the IF-1 family. As to quaternary structure, component of the 30S ribosomal translation pre-initiation complex which assembles on the 30S ribosome in the order IF-2 and IF-3, IF-1 and N-formylmethionyl-tRNA(fMet); mRNA recruitment can occur at any time during PIC assembly.

The protein localises to the cytoplasm. One of the essential components for the initiation of protein synthesis. Stabilizes the binding of IF-2 and IF-3 on the 30S subunit to which N-formylmethionyl-tRNA(fMet) subsequently binds. Helps modulate mRNA selection, yielding the 30S pre-initiation complex (PIC). Upon addition of the 50S ribosomal subunit IF-1, IF-2 and IF-3 are released leaving the mature 70S translation initiation complex. The sequence is that of Translation initiation factor IF-1 2 from Chromobacterium violaceum (strain ATCC 12472 / DSM 30191 / JCM 1249 / CCUG 213 / NBRC 12614 / NCIMB 9131 / NCTC 9757 / MK).